Here is a 247-residue protein sequence, read N- to C-terminus: Triosephosphate isomerase (247 aa).

8 to 10 is a substrate binding site; the sequence is NWK. His-94 serves as the catalytic Electrophile. Glu-165 functions as the Proton acceptor in the catalytic mechanism. 2 residues coordinate substrate: Gly-171 and Ser-210.

The protein belongs to the triosephosphate isomerase family. As to quaternary structure, homodimer.

It localises to the cytoplasm. It carries out the reaction D-glyceraldehyde 3-phosphate = dihydroxyacetone phosphate. The protein operates within carbohydrate biosynthesis; gluconeogenesis. It participates in carbohydrate degradation; glycolysis; D-glyceraldehyde 3-phosphate from glycerone phosphate: step 1/1. Functionally, involved in the gluconeogenesis. Catalyzes stereospecifically the conversion of dihydroxyacetone phosphate (DHAP) to D-glyceraldehyde-3-phosphate (G3P). This is Triosephosphate isomerase from Aquifex aeolicus (strain VF5).